Consider the following 517-residue polypeptide: Crotonobetaine/carnitine--CoA ligase (517 aa).

It belongs to the ATP-dependent AMP-binding enzyme family.

It carries out the reaction 4-(trimethylamino)butanoate + ATP + CoA = 4-(trimethylamino)butanoyl-CoA + AMP + diphosphate. The catalysed reaction is crotonobetaine + ATP + CoA = crotonobetainyl-CoA + AMP + diphosphate. It catalyses the reaction (R)-carnitine + ATP + CoA = (R)-carnitinyl-CoA + AMP + diphosphate. The protein operates within amine and polyamine metabolism; carnitine metabolism. Catalyzes the transfer of CoA to carnitine, generating the initial carnitinyl-CoA needed for the CaiB reaction cycle. Also has activity toward crotonobetaine and gamma-butyrobetaine. This chain is Crotonobetaine/carnitine--CoA ligase, found in Escherichia coli O6:K15:H31 (strain 536 / UPEC).